Reading from the N-terminus, the 284-residue chain is MEAIKKKMQAMKLEKDNAVDRAETAEQQSREAALRAEKAEEEVRSLQKKIQQIENELDQVQEQLSQANSKLEEKDKALQAAEAEVAAHNRRIQLLEEDLERSEERLKIATQKLEEASQAADESERMRKMLEHRSITDEERMDGLEGQLKEARTMAEDADRKYDEVARKLAMVEADLERAEERAETGETKIVELEEELRVVGNNLKSLEVSEEKALQKEETYEMQIRQMTNRLQEAEARAEFAERSVQKLQKEVDRLEDELVQEKEKYKAISDELDQTFSELTGY.

A disordered region spans residues 1 to 38; it reads MEAIKKKMQAMKLEKDNAVDRAETAEQQSREAALRAEK. Positions 1–284 form a coiled coil; that stretch reads MEAIKKKMQA…DQTFSELTGY (284 aa). Residues 12–38 show a composition bias toward basic and acidic residues; it reads KLEKDNAVDRAETAEQQSREAALRAEK.

Belongs to the tropomyosin family. In terms of assembly, homodimer.

Its function is as follows. Tropomyosin, in association with the troponin complex, plays a central role in the calcium dependent regulation of muscle contraction. The chain is Tropomyosin from Rhipicephalus microplus (Cattle tick).